A 695-amino-acid polypeptide reads, in one-letter code: Follicle-stimulating hormone receptor (695 aa).

A signal peptide spans 1–17 (MALLLVSLLAFLSLGSG). 2 disulfides stabilise this stretch: Cys-18/Cys-25 and Cys-23/Cys-32. Residues 18–46 (CHHRICHCSNRVFLCQESKVTEIPSDLPR) enclose the LRRNT domain. Over 18–366 (CHHRICHCSN…EDIMGYNILR (349 aa)) the chain is Extracellular. LRR repeat units lie at residues 49 to 72 (IELR…FGDL), 73 to 97 (EKIE…LPKL), 98 to 118 (HEIR…AFQN), 119 to 143 (LPNL…KIHS), 144 to 169 (LQKV…VGLS), 170 to 192 (FESV…AFNG), 193 to 216 (TQLD…VFHG), 217 to 240 (ASGP…GLEN), and 241 to 259 (LKKL…PTLE). 2 N-linked (GlcNAc...) asparagine glycosylation sites follow: Asn-191 and Asn-199. Cystine bridges form between Cys-275-Cys-346, Cys-276-Cys-292, Cys-276-Cys-356, and Cys-292-Cys-338. Residues Asn-293 and Asn-318 are each glycosylated (N-linked (GlcNAc...) asparagine). Tyr-335 is modified (sulfotyrosine). The helical transmembrane segment at 367 to 387 (VLIWFISILAITGNIIVLVIL) threads the bilayer. Topologically, residues 388-398 (TTSQYKLTVPR) are cytoplasmic. The helical transmembrane segment at 399–421 (FLMCNLAFADLCIGIYLLLIASV) threads the bilayer. The Extracellular segment spans residues 422–443 (DIHTKSQYHNYAIDWQTGAGCD). Cys-442 and Cys-517 are disulfide-bonded. The chain crosses the membrane as a helical span at residues 444 to 465 (AAGFFTVFASELSVYTLTAITL). The Cytoplasmic segment spans residues 466-485 (ERWHTITHAMQLDCKVQLRH). The chain crosses the membrane as a helical span at residues 486–508 (AASVMVMGWIFAFAAALFPIFGI). At 509-528 (SSYMKVSICLPMDIDSPLSQ) the chain is on the extracellular side. The chain crosses the membrane as a helical span at residues 529–550 (LYVMSLLVLNVLAFVVICGCYI). Residues 551–573 (HIYLTVRNPNIVSSSSDTRIAKR) lie on the Cytoplasmic side of the membrane. The helical transmembrane segment at 574–597 (MAMLIFTDFLCMAPISFFAISASL) threads the bilayer. At 598–608 (KVPLITVSKAK) the chain is on the extracellular side. A helical transmembrane segment spans residues 609–630 (ILLVLFHPINSCANPFLYAIFT). The Cytoplasmic portion of the chain corresponds to 631 to 695 (KNFRRDFFIL…LVPLSHLAQN (65 aa)).

It belongs to the G-protein coupled receptor 1 family. FSH/LSH/TSH subfamily. Homotrimer. Functions as a homotrimer binding the FSH hormone heterodimer composed of CGA and FSHB. Interacts with ARRB2. Interacts with APPL2; interaction is independent of follicle stimulating hormone stimulation. Post-translationally, sulfated. N-glycosylated; indirectly required for FSH-binding, possibly via a conformational change that allows high affinity binding of hormone. As to expression, sertoli cells and ovarian granulosa cells.

It localises to the cell membrane. Functionally, g protein-coupled receptor for follitropin, the follicle-stimulating hormone. Through cAMP production activates the downstream PI3K-AKT and ERK1/ERK2 signaling pathways. This Homo sapiens (Human) protein is Follicle-stimulating hormone receptor (FSHR).